We begin with the raw amino-acid sequence, 543 residues long: Cytochrome P450 307a1 (543 aa).

At S219 the chain carries Phosphoserine. The tract at residues 440–460 (FLEPSKEQSPKNSKGSDSGIE) is disordered. The segment covering 449 to 460 (PKNSKGSDSGIE) has biased composition (polar residues). C485 provides a ligand contact to heme.

This sequence belongs to the cytochrome P450 family. Heme is required as a cofactor.

It is found in the endoplasmic reticulum membrane. It localises to the microsome membrane. In terms of biological role, required for correct development of the embryonic midline glial cells which are necessary for the formation of distinct segmental commissures. This Drosophila melanogaster (Fruit fly) protein is Cytochrome P450 307a1 (spo).